The primary structure comprises 129 residues: Small ribosomal subunit protein uS11 (129 aa).

This sequence belongs to the universal ribosomal protein uS11 family. In terms of assembly, part of the 30S ribosomal subunit. Interacts with proteins S7 and S18. Binds to IF-3.

In terms of biological role, located on the platform of the 30S subunit, it bridges several disparate RNA helices of the 16S rRNA. Forms part of the Shine-Dalgarno cleft in the 70S ribosome. The sequence is that of Small ribosomal subunit protein uS11 from Brucella abortus (strain S19).